We begin with the raw amino-acid sequence, 386 residues long: Synaptotagmin-5 (386 aa).

A compositionally biased stretch (pro residues) spans 1 to 16 (MFPEPPTLGSPAPKTP). A disordered region spans residues 1 to 21 (MFPEPPTLGSPAPKTPPDSSR). At 1–24 (MFPEPPTLGSPAPKTPPDSSRIRQ) the chain is on the vesicular side. The helical transmembrane segment at 25–45 (GAVPAWVLATIVLGSGLLVFS) threads the bilayer. Residues 46–386 (SCFCLYRKRC…PDRARPIPAP (341 aa)) lie on the Cytoplasmic side of the membrane. 2 consecutive C2 domains span residues 108–227 (QLGR…QAWR) and 239–372 (KLGD…AQWH). Positions 138, 139, 145, 197, 198, 199, 202, 205, 270, 276, 330, and 332 each coordinate Ca(2+).

The protein belongs to the synaptotagmin family. In terms of assembly, homodimer. Interacts with both alpha- and beta-tubulin. Requires Ca(2+) as cofactor.

It localises to the cytoplasmic vesicle. The protein resides in the secretory vesicle. The protein localises to the synaptic vesicle membrane. Its subcellular location is the recycling endosome membrane. Functionally, may be involved in Ca(2+)-dependent exocytosis of secretory vesicles through Ca(2+) and phospholipid binding to the C2 domain or may serve as Ca(2+) sensors in the process of vesicular trafficking and exocytosis. Regulates the Ca(2+)-dependent secretion of norepinephrine in PC12 cells. Required for export from the endocytic recycling compartment to the cell surface. The polypeptide is Synaptotagmin-5 (Syt5) (Mus musculus (Mouse)).